The sequence spans 274 residues: Kit ligand (274 aa).

The signal sequence occupies residues 1–25 (MKKTQTWIITCIYLQLLLFNPLVKT). At 26–215 (KGICGKRVTD…SNSIGDSNLQ (190 aa)) the chain is on the extracellular side. 2 cysteine pairs are disulfide-bonded: C29/C114 and C68/C164. 4 N-linked (GlcNAc...) asparagine glycosylation sites follow: N90, N97, N145, and N196. A helical transmembrane segment spans residues 216-238 (WAAMALPAFFSLVIGFAFGALYW). The Cytoplasmic portion of the chain corresponds to 239-274 (KKKQPNLTRTVENIQINEEDNEISMLQEKEREFQEV).

It belongs to the SCF family. Homodimer, non-covalently linked. A soluble form is produced by proteolytic processing of the extracellular domain.

It localises to the cytoplasm. The protein resides in the cytoskeleton. The protein localises to the cell membrane. Its subcellular location is the cell projection. It is found in the lamellipodium. It localises to the filopodium. The protein resides in the secreted. Stimulates the proliferation of mast cells. Able to augment the proliferation of both myeloid and lymphoid hematopoietic progenitors in bone marrow culture. Also mediates cell-cell adhesion. Acts synergistically with other cytokines, probably interleukins. In Canis lupus familiaris (Dog), this protein is Kit ligand (KITLG).